The chain runs to 515 residues: ATP synthase subunit alpha (515 aa).

Residue 171–178 (GDRQTGKT) coordinates ATP.

It belongs to the ATPase alpha/beta chains family. F-type ATPases have 2 components, CF(1) - the catalytic core - and CF(0) - the membrane proton channel. CF(1) has five subunits: alpha(3), beta(3), gamma(1), delta(1), epsilon(1). CF(0) has three main subunits: a(1), b(2) and c(9-12). The alpha and beta chains form an alternating ring which encloses part of the gamma chain. CF(1) is attached to CF(0) by a central stalk formed by the gamma and epsilon chains, while a peripheral stalk is formed by the delta and b chains.

Its subcellular location is the cell inner membrane. It carries out the reaction ATP + H2O + 4 H(+)(in) = ADP + phosphate + 5 H(+)(out). Produces ATP from ADP in the presence of a proton gradient across the membrane. The alpha chain is a regulatory subunit. This is ATP synthase subunit alpha from Xanthomonas oryzae pv. oryzae (strain MAFF 311018).